The chain runs to 354 residues: Uroporphyrinogen decarboxylase (354 aa).

Substrate contacts are provided by residues 27-31 (RQAGR), Asp77, Tyr154, Thr209, and His327.

This sequence belongs to the uroporphyrinogen decarboxylase family. In terms of assembly, homodimer.

Its subcellular location is the cytoplasm. It catalyses the reaction uroporphyrinogen III + 4 H(+) = coproporphyrinogen III + 4 CO2. Its pathway is porphyrin-containing compound metabolism; protoporphyrin-IX biosynthesis; coproporphyrinogen-III from 5-aminolevulinate: step 4/4. Catalyzes the decarboxylation of four acetate groups of uroporphyrinogen-III to yield coproporphyrinogen-III. This Citrobacter koseri (strain ATCC BAA-895 / CDC 4225-83 / SGSC4696) protein is Uroporphyrinogen decarboxylase.